The following is a 196-amino-acid chain: ATP-dependent Clp protease proteolytic subunit (196 aa).

Residue Ser96 is the Nucleophile of the active site. The active site involves His121.

It belongs to the peptidase S14 family. Fourteen ClpP subunits assemble into 2 heptameric rings which stack back to back to give a disk-like structure with a central cavity, resembling the structure of eukaryotic proteasomes.

Its subcellular location is the cytoplasm. It catalyses the reaction Hydrolysis of proteins to small peptides in the presence of ATP and magnesium. alpha-casein is the usual test substrate. In the absence of ATP, only oligopeptides shorter than five residues are hydrolyzed (such as succinyl-Leu-Tyr-|-NHMec, and Leu-Tyr-Leu-|-Tyr-Trp, in which cleavage of the -Tyr-|-Leu- and -Tyr-|-Trp bonds also occurs).. Cleaves peptides in various proteins in a process that requires ATP hydrolysis. Has a chymotrypsin-like activity. Plays a major role in the degradation of misfolded proteins. This chain is ATP-dependent Clp protease proteolytic subunit, found in Streptococcus thermophilus (strain CNRZ 1066).